The sequence spans 295 residues: GDP-polyphosphate phosphotransferase (295 aa).

The interval 1–28 is disordered; it reads MDIPSVDVSTATNDGASSRAKGHRSAAP. Residues 7 to 16 show a composition bias toward polar residues; sequence DVSTATNDGA. A phosphohistidine mark is found at histidine 115 and histidine 247.

The protein belongs to the polyphosphate kinase 2 (PPK2) family. Class I subfamily. As to quaternary structure, interacts with Ndk. In terms of processing, autophosphorylated at His-115 and His-247 using polyP as a phosphate donor.

It carries out the reaction [phosphate](n) + GTP = [phosphate](n+1) + GDP. Its function is as follows. Uses inorganic polyphosphate (polyP) as a donor to convert GDP to GTP. In addition, modulates nucleotide triphosphate synthesis catalyzed by the nucleoside diphosphate kinase (Ndk) in favor of GTP production over CTP or UTP. Plays an important role in survival of M.tuberculosis in macrophages. This is GDP-polyphosphate phosphotransferase from Mycobacterium tuberculosis (strain ATCC 25618 / H37Rv).